A 469-amino-acid chain; its full sequence is UDP-N-acetylmuramate--L-alanine ligase (469 aa).

An ATP-binding site is contributed by 113–119 (GTHGKTT).

The protein belongs to the MurCDEF family.

It is found in the cytoplasm. The catalysed reaction is UDP-N-acetyl-alpha-D-muramate + L-alanine + ATP = UDP-N-acetyl-alpha-D-muramoyl-L-alanine + ADP + phosphate + H(+). The protein operates within cell wall biogenesis; peptidoglycan biosynthesis. In terms of biological role, cell wall formation. This is UDP-N-acetylmuramate--L-alanine ligase from Neisseria meningitidis serogroup A / serotype 4A (strain DSM 15465 / Z2491).